A 188-amino-acid chain; its full sequence is UPF0301 protein Smal_0940 (188 aa).

It belongs to the UPF0301 (AlgH) family.

This chain is UPF0301 protein Smal_0940, found in Stenotrophomonas maltophilia (strain R551-3).